The primary structure comprises 140 residues: Protein BIC1 (140 aa).

The segment covering 1–10 (MMNIDDTTSP) has biased composition (polar residues). Positions 1–71 (MMNIDDTTSP…RVDTGRERLK (71 aa)) are disordered. Residues 42-68 (ADKKDLALLEEKPKQSQEEDRVDTGRE) are compositionally biased toward basic and acidic residues.

As to quaternary structure, interacts with CRY2 in both darkness and light.

The protein resides in the nucleus. Functionally, regulates the blue-light dependent dimerization of CRY2 and formation of photobodies. Interacts with photoexited CRY2 to inhibit its activity. Inhibits CRY phosphorylation. The polypeptide is Protein BIC1 (Arabidopsis thaliana (Mouse-ear cress)).